Here is a 348-residue protein sequence, read N- to C-terminus: tRNA pseudouridine synthase D (348 aa).

Aspartate 84 serves as the catalytic Nucleophile. The 147-residue stretch at 162–308 folds into the TRUD domain; that stretch reads GVPNYFGPQR…ARMDRRPLCL (147 aa).

Belongs to the pseudouridine synthase TruD family.

It catalyses the reaction uridine(13) in tRNA = pseudouridine(13) in tRNA. Its function is as follows. Responsible for synthesis of pseudouridine from uracil-13 in transfer RNAs. This is tRNA pseudouridine synthase D from Chromohalobacter salexigens (strain ATCC BAA-138 / DSM 3043 / CIP 106854 / NCIMB 13768 / 1H11).